Reading from the N-terminus, the 667-residue chain is Long-chain fatty acid transport protein 3 (667 aa).

A helical transmembrane segment spans residues 3 to 23 (ALLLLLPLLLLLPLLLKLDVW). The segment at 114–144 (TGGRRGSGRGSTEEGARVAPPAGDAAARGTT) is disordered. Residues 130–144 (RVAPPAGDAAARGTT) show a composition bias toward low complexity. ATP-binding positions include 272–276 (TSGTT), His-315, Thr-412, Asp-512, Arg-527, and Lys-619.

Belongs to the ATP-dependent AMP-binding enzyme family. In terms of tissue distribution, expressed at high levels in adrenal gland, testis and ovary. Expressed at lower levels in adult brain. Found in adrenal cortical cells, spermatocytes and interstitial cells of the testis, theca cells of the ovary, cerebral cortical neurons, and cerebellar Purkinje cells (at protein level).

It is found in the mitochondrion membrane. The catalysed reaction is a fatty acid(in) = a fatty acid(out). It catalyses the reaction a long-chain fatty acid + ATP + CoA = a long-chain fatty acyl-CoA + AMP + diphosphate. It carries out the reaction (5Z,8Z,11Z,14Z)-eicosatetraenoate + ATP + CoA = (5Z,8Z,11Z,14Z)-eicosatetraenoyl-CoA + AMP + diphosphate. The enzyme catalyses hexadecanoate + ATP + CoA = hexadecanoyl-CoA + AMP + diphosphate. The catalysed reaction is (9Z)-octadecenoate + ATP + CoA = (9Z)-octadecenoyl-CoA + AMP + diphosphate. It catalyses the reaction (9Z,12Z)-octadecadienoate + ATP + CoA = (9Z,12Z)-octadecadienoyl-CoA + AMP + diphosphate. It carries out the reaction a very long-chain fatty acid + ATP + CoA = a very long-chain fatty acyl-CoA + AMP + diphosphate. The enzyme catalyses tetracosanoate + ATP + CoA = tetracosanoyl-CoA + AMP + diphosphate. In terms of biological role, mainly functions as an acyl-CoA ligase catalyzing the ATP-dependent formation of fatty acyl-CoA using LCFA and very-long-chain fatty acids (VLCFA) as substrates. Can mediate the levels of long-chain fatty acids (LCFA) in the cell by facilitating their transport across membranes. The sequence is that of Long-chain fatty acid transport protein 3 (Slc27a3) from Mus musculus (Mouse).